A 178-amino-acid chain; its full sequence is Large ribosomal subunit protein uL6 (178 aa).

This sequence belongs to the universal ribosomal protein uL6 family. Part of the 50S ribosomal subunit.

This protein binds to the 23S rRNA, and is important in its secondary structure. It is located near the subunit interface in the base of the L7/L12 stalk, and near the tRNA binding site of the peptidyltransferase center. This chain is Large ribosomal subunit protein uL6, found in Streptococcus gordonii (strain Challis / ATCC 35105 / BCRC 15272 / CH1 / DL1 / V288).